The sequence spans 296 residues: uncharacterized protein (296 aa).

The 60-residue stretch at 1–60 (MDPKISYFQTFIVASKTKSFSKAAKRLGITQGTVSNHISALEKYFDAQLFLRTPEGVDLT) folds into the HTH lysR-type domain. A DNA-binding region (H-T-H motif) is located at residues 20-39 (FSKAAKRLGITQGTVSNHIS).

This sequence belongs to the LysR transcriptional regulatory family.

This is an uncharacterized protein from Methanocaldococcus jannaschii (strain ATCC 43067 / DSM 2661 / JAL-1 / JCM 10045 / NBRC 100440) (Methanococcus jannaschii).